The following is a 53-amino-acid chain: Reg12l (53 aa).

Residues 1 to 34 constitute a propeptide that is removed on maturation; sequence RVLFRSGDQPADQPAERMQDISPEQNPLFHPDKR. 3 cysteine pairs are disulfide-bonded: C36–C50, C37–C48, and C42–C51.

It belongs to the conotoxin M superfamily. As to expression, expressed by the venom duct.

The protein resides in the secreted. The protein is Reg12l of Conus regius (Crown cone).